Here is an 857-residue protein sequence, read N- to C-terminus: MAFPAPAFSLANLLNGSYGVDTPEDVERLRSEQREEAAAACRNYRPLPAVDVSESVSEDAHSLQTPDGAPAEAVSDEFVTYGAEDYLEKSDDELLVAFETMVKPMRIGQLWCPAFNKCSFISSIAMARALLLAPRTSHRTMKCFEDLVAAIYTKSDFYYSEECEADDIQMDISSRDVPGYSFEPWSRTSGFEPPPICEACDMIMYQCPCFDFNALKKSCAERTFADDYVIEGLDGVVDNATLLSNLGPFLVPVKCQYEKCPTPTIAIPPNLNRATDRVDINLVQSICDSTLPTHSNYDDSFHQVFVESADYSIDLDHVRLRQSDLIAKIPDSGHMIPVLNTGSGHKRVGTTKEVLTAIKKRNADVPELGDSVNLSRLSKAVAERFFISYINGNSLASSNFVNVVSNFHDYMEKWKSSGLSYDDLPDLHAENLQFYDHMIKSDVKPVVSDTLNIDRPVPATITYHKKSITSQFSPLFTALFERFQRCLRERIILPVGKISSLEMAGFDVKSKYCLEIDLSKFDKSQGEFHLLIQEHILNGLGCPAPITKWWCDFHRFSYIRDRRAGVGMPISFQRRTGDAFTYFGNTIVTMAEFAWCYDTDQFEKLLFSGDDSLGFSLLPPVGDPSKFTTLYNMEAKVMEPSVPYICSKFLLSDEFGNTFSVPDPLREVQRLGTKKIPYSDNDEFLFAHFMSFVDRLKFLDRMSQSCIDQLSIFFELKYKKSGEEAALMLGAFKKYTANFQSYKELYYSDRRQCELINSFCSTEFRVERVNSNKLRKKYGIERRCDDKRRTPTGSYGGGEEAETKVSQTKSTGTRSQKSQRESAFKSQTVPLPTVLSSGWSGTDRVVPPRERGGVTRA.

Residues 511 to 624 (KYCLEIDLSK…FSLLPPVGDP (114 aa)) enclose the RdRp catalytic domain. The disordered stretch occupies residues 785–857 (DDKRRTPTGS…PRERGGVTRA (73 aa)). 2 stretches are compositionally biased toward polar residues: residues 804–816 (KVSQ…TRSQ) and 824–840 (FKSQ…SGWS). Residues 846–857 (VPPRERGGVTRA) show a composition bias toward basic and acidic residues.

The protein belongs to the ssRNA positive-strand viruses RNA-directed RNA polymerase family. As to quaternary structure, interacts with replication protein 1a.

It carries out the reaction RNA(n) + a ribonucleoside 5'-triphosphate = RNA(n+1) + diphosphate. Its function is as follows. RNA-dependent RNA polymerase which replicates the viral genome composed of 3 RNA segments, RNA1, RNA2 and RNA3. The protein is RNA-directed RNA polymerase 2a of Cucumis sativus (Cucumber).